Consider the following 140-residue polypeptide: Arsenate-mycothiol transferase ArsC1 (140 aa).

Belongs to the low molecular weight phosphotyrosine protein phosphatase family.

The protein localises to the cytoplasm. The catalysed reaction is mycothiol + arsenate = arseno-mycothiol + H2O. In terms of biological role, involved in defense against toxic arsenate. Involved in the mycothiol/myoredoxin redox pathway which uses a mycothioltransferase mechanism; facilitates adduct formation between arsenate and mycothiol. The chain is Arsenate-mycothiol transferase ArsC1 (arsC1) from Corynebacterium glutamicum (strain ATCC 13032 / K051).